We begin with the raw amino-acid sequence, 343 residues long: Delta(1)-pyrroline-2-carboxylate/Delta(1)-piperideine-2-carboxylate reductase (343 aa).

The active-site Charge relay system is Ser53. Residue His54 is the Proton donor of the active site. Arg58 provides a ligand contact to substrate. 126 to 130 (HFAAL) provides a ligand contact to NADP(+). Residue Thr166 coordinates substrate. 184-186 (DLA) is an NADP(+) binding site. 192 to 193 (HG) contacts substrate. Asp194 acts as the Charge relay system in catalysis. NADP(+) contacts are provided by residues 236–237 (HK) and 309–315 (RLPGDRR).

The protein belongs to the LDH2/MDH2 oxidoreductase family. Homodimer.

It catalyses the reaction L-pipecolate + NADP(+) = Delta(1)-piperideine-2-carboxylate + NADPH + H(+). The catalysed reaction is L-proline + NADP(+) = 1-pyrroline-2-carboxylate + NADPH + H(+). The enzyme catalyses N-methyl-L-alanine + NADP(+) + H2O = methylamine + pyruvate + NADPH + H(+). Is inhibited by the substrate analog pyrrole-2-carboxylate, and by 2-picolinate. Functionally, catalyzes the reduction of both Delta(1)-pyrroline-2-carboxylate (Pyr2C) and Delta(1)-piperideine-2-carboxylate (Pip2C) to L-proline and L-pipecolate, respectively, using NADPH as the electron donor. Can catalyze the reverse oxidation reactions, albeit at a much lower rate. Is also able to catalyze in vitro the NADPH-dependent formation of N-methylalanine from pyruvate and N-methylamine; can act on other alpha-keto acids and specifically uses methylamine and not ammonia for these reductive amination reactions. Can use NADH instead of NADPH, although with much less efficiency. In Pseudomonas syringae pv. tomato, this protein is Delta(1)-pyrroline-2-carboxylate/Delta(1)-piperideine-2-carboxylate reductase.